We begin with the raw amino-acid sequence, 343 residues long: Aspartate carbamoyltransferase catalytic subunit (343 aa).

Carbamoyl phosphate-binding residues include Arg-71 and Thr-72. Lys-99 contributes to the L-aspartate binding site. Positions 121, 149, and 152 each coordinate carbamoyl phosphate. L-aspartate-binding residues include Arg-195 and Arg-249. Residues Gly-290 and Pro-291 each contribute to the carbamoyl phosphate site.

The protein belongs to the aspartate/ornithine carbamoyltransferase superfamily. ATCase family. In terms of assembly, heterododecamer (2C3:3R2) of six catalytic PyrB chains organized as two trimers (C3), and six regulatory PyrI chains organized as three dimers (R2).

The catalysed reaction is carbamoyl phosphate + L-aspartate = N-carbamoyl-L-aspartate + phosphate + H(+). The protein operates within pyrimidine metabolism; UMP biosynthesis via de novo pathway; (S)-dihydroorotate from bicarbonate: step 2/3. In terms of biological role, catalyzes the condensation of carbamoyl phosphate and aspartate to form carbamoyl aspartate and inorganic phosphate, the committed step in the de novo pyrimidine nucleotide biosynthesis pathway. The sequence is that of Aspartate carbamoyltransferase catalytic subunit from Rhodopirellula baltica (strain DSM 10527 / NCIMB 13988 / SH1).